A 266-amino-acid polypeptide reads, in one-letter code: Bax inhibitor 1 (266 aa).

The disordered stretch occupies residues 1–22; the sequence is MPANYQSVPQDDPSVPNLAQAP. Transmembrane regions (helical) follow at residues 70 to 90, 92 to 112, 123 to 143, 147 to 167, 177 to 197, 201 to 221, and 240 to 260; these read LFVT…SFWV, MHPW…FGLI, IFLF…ITFF, IILE…AFTF, GGFL…FFFV, PFID…YILF, and LMLY…LGML.

This sequence belongs to the BI1 family. LFG subfamily.

It localises to the endoplasmic reticulum membrane. Its subcellular location is the mitochondrion membrane. It is found in the golgi apparatus membrane. The protein resides in the vacuole membrane. Its function is as follows. Links the unfolded protein response and programmed cell death and mediates mitochondrial-dependent apoptosis. Induces cell death and disruption of the mitochondrial transmembrane potential. The chain is Bax inhibitor 1 (bxi1) from Schizosaccharomyces pombe (strain 972 / ATCC 24843) (Fission yeast).